A 379-amino-acid polypeptide reads, in one-letter code: Succinyl-diaminopimelate desuccinylase (379 aa).

His70 lines the Zn(2+) pocket. Asp72 is a catalytic residue. Asp103 is a Zn(2+) binding site. Glu137 acts as the Proton acceptor in catalysis. Residues Glu138, Glu166, and His352 each coordinate Zn(2+).

The protein belongs to the peptidase M20A family. DapE subfamily. Homodimer. It depends on Zn(2+) as a cofactor. Co(2+) serves as cofactor.

It carries out the reaction N-succinyl-(2S,6S)-2,6-diaminopimelate + H2O = (2S,6S)-2,6-diaminopimelate + succinate. Its pathway is amino-acid biosynthesis; L-lysine biosynthesis via DAP pathway; LL-2,6-diaminopimelate from (S)-tetrahydrodipicolinate (succinylase route): step 3/3. Functionally, catalyzes the hydrolysis of N-succinyl-L,L-diaminopimelic acid (SDAP), forming succinate and LL-2,6-diaminopimelate (DAP), an intermediate involved in the bacterial biosynthesis of lysine and meso-diaminopimelic acid, an essential component of bacterial cell walls. The chain is Succinyl-diaminopimelate desuccinylase from Burkholderia mallei (strain NCTC 10247).